A 117-amino-acid chain; its full sequence is B-enzyme (117 aa).

Residue Asp-89 is part of the active site.

It carries out the reaction Hydrolysis of (1-&gt;4)-beta-linkages between N-acetylmuramic acid and N-acetyl-D-glucosamine residues in a peptidoglycan and between N-acetyl-D-glucosamine residues in chitodextrins.. The sequence is that of B-enzyme (lyzB) from Bacillus subtilis.